A 728-amino-acid chain; its full sequence is Methionine--tRNA ligase (728 aa).

The 'HIGH' region signature appears at 13-23; that stretch reads PYANGSIHLGH. 4 residues coordinate Zn(2+): Cys144, Cys147, Cys157, and Cys160. The short motif at 348 to 352 is the 'KMSKS' region element; the sequence is KMSKS. Lys351 provides a ligand contact to ATP. The segment at 585–620 is disordered; it reads LAPAKSQQVAQAVETMEKNSSTTPAPAKEGEAGQAS. The tRNA-binding domain occupies 628 to 728; sequence DFGKIDLRVA…EGARPGMKVK (101 aa).

This sequence belongs to the class-I aminoacyl-tRNA synthetase family. MetG type 1 subfamily. Homodimer. It depends on Zn(2+) as a cofactor.

It localises to the cytoplasm. It catalyses the reaction tRNA(Met) + L-methionine + ATP = L-methionyl-tRNA(Met) + AMP + diphosphate. Is required not only for elongation of protein synthesis but also for the initiation of all mRNA translation through initiator tRNA(fMet) aminoacylation. The chain is Methionine--tRNA ligase from Nitrosospira multiformis (strain ATCC 25196 / NCIMB 11849 / C 71).